The chain runs to 1147 residues: Lon protease homolog 2, peroxisomal (1147 aa).

The Lon N-terminal domain maps to leucine 20–isoleucine 348. 2 disordered regions span residues lysine 395–aspartate 444 and lysine 561–threonine 626. The span at aspartate 427–aspartate 444 shows a compositional bias: acidic residues. 2 stretches are compositionally biased toward basic and acidic residues: residues lysine 561–glutamate 574 and lysine 582–aspartate 597. Glycine 651–threonine 658 contacts ATP. A Lon proteolytic domain is found at serine 903 to aspartate 1131. Active-site residues include serine 1006 and lysine 1049.

It belongs to the peptidase S16 family.

Its subcellular location is the peroxisome matrix. It catalyses the reaction Hydrolysis of proteins in presence of ATP.. Functionally, ATP-dependent serine protease that mediates the selective degradation of misfolded and unassembled polypeptides in the peroxisomal matrix. Necessary for type 2 peroxisome targeting signal (PTS2)-containing protein processing and facilitates peroxisome matrix protein import. In Debaryomyces hansenii (strain ATCC 36239 / CBS 767 / BCRC 21394 / JCM 1990 / NBRC 0083 / IGC 2968) (Yeast), this protein is Lon protease homolog 2, peroxisomal.